The sequence spans 490 residues: 5'-3' exonuclease PLD3 (490 aa).

Over 1–38 (MKPKLMYQELKVPAEEPANELPMNEIEAWKAAEKKARW) the chain is Cytoplasmic. Residues 39-59 (VLLVLILAVVGFGALMTQLFL) form a helical; Signal-anchor for type II membrane protein membrane-spanning segment. The Lumenal segment spans residues 60 to 490 (WEYGDLHLFG…DSVGNACRLL (431 aa)). Cystine bridges form between Cys77-Cys239 and Cys81-Cys237. 2 N-linked (GlcNAc...) asparagine glycosylation sites follow: Asn97 and Asn132. The 28-residue stretch at 196-223 (THGVLHTKFWVVDQTHFYLGSANMDWRS) folds into the PLD phosphodiesterase 1 domain. Active-site residues include His201, Lys203, and Asp208. Residue His201 is the Proton donor of the active site. Positions 201 and 203 each coordinate phosphate. Asn218 serves as a coordination point for phosphate. N-linked (GlcNAc...) asparagine glycans are attached at residues Asn236, Asn284, and Asn387. Cys366 and Cys487 are oxidised to a cystine. Residues 411 to 437 (YARVNHNKYMVTERATYIGTSNWSGNY) enclose the PLD phosphodiesterase 2 domain. Position 416 (His416) interacts with phosphate. His416 (nucleophile) is an active-site residue. Phe438 provides a ligand contact to Mg(2+).

Belongs to the phospholipase D family. Homodimer. Interacts with APP. Post-translationally, N-glycosylated. In terms of processing, proteolytically processed to a soluble form that is stable within endosomes and lysosomes. During transport through the secretory pathway becomes proteolysed by cysteine proteases, thereby releasing a stable soluble lysosomal lumenal polypeptide, whereas the transmembrane-bound fragment is rapidly degraded. Its transport route to lysosomes involves ubiquitination and the ESCRT complex. Ubiquitinated. Ubiquitination mediates sorting into lysosomes.

The protein resides in the endoplasmic reticulum membrane. Its subcellular location is the lysosome lumen. It is found in the early endosome membrane. It localises to the late endosome membrane. The protein localises to the golgi apparatus membrane. The protein resides in the endosome membrane. It catalyses the reaction Exonucleolytic cleavage in the 5'- to 3'-direction to yield nucleoside 3'-phosphates.. The enzyme catalyses a 5'-end 5'-dephospho-ribonucleotidyl-ribonucleotide-RNA + H2O = a ribonucleoside 3'-phosphate + a 5'-end dephospho-ribonucleoside-RNA + H(+). The catalysed reaction is a ribonucleoside 3'-phosphate-2'-3'-cyclophospho-GMP + H2O = a ribonucleoside 3'-phosphate + 2',3'-cyclophospho-GMP + H(+). It carries out the reaction a 5'-end 5'-dephospho-2'-deoxyribonucleotidyl-2'-deoxyribonucleotide in single-stranded DNA + H2O = a 5'-end dephospho-2'-deoxyribonucleoside in single-stranded DNA + a 2'-deoxyribonucleoside 3'-phosphate + H(+). It catalyses the reaction a 5'-end 5'-phospho-2'-deoxyribonucleotide in single-stranded DNA + H2O = a 5'-end 5'-dephospho-2'-deoxyribonucleotide in single-stranded DNA + phosphate. The enzyme catalyses a 3-lyso-sn-glycero-1-phospho-(3'-acyl-1'-sn-glycerol) + a 1-acyl-sn-glycerol = a 3-acyl-sn-glycero-1-phospho-(3'-acyl-1'-sn-glycerol) + glycerol. The catalysed reaction is 3-lyso-sn-glycero-1-phospho-(3'-(9Z-octadecenoyl)-1'-sn-glycerol) + 1-(9Z-octadecenoyl)-sn-glycerol = 3-(9Z-octadecenoyl)-sn-glycero-1-phospho-(3'-(9Z-octadecenoyl)-1'-sn-glycerol) + glycerol. Functionally, 5'-&gt;3' exonuclease that hydrolyzes the phosphodiester bond of single-stranded DNA (ssDNA) and RNA molecules to form nucleoside 3'-monophosphates and 5'-end 5'-hydroxy deoxyribonucleotide/ribonucleotide fragments. Partially redundant with PLD4, can cleave all four nucleotides displaying higher efficiency for ssDNA and RNA fragments initiated with uridine and guanosine residues and lower efficiency for cytidine-initiated substrates. As a result, it does not always degrade polynucleotides to the single nucleotide level, it can stall at specific sites sparing certain fragments from exonucleolytic degradation. Processes self and pathogenic ssDNA and RNA molecules that reach the endolysosomal compartment via phagocytosis or autophagy and may serve as 'danger' signals for recognition by innate immune receptors such as toll-like receptors (TLRs). Degrades mitochondrial CpG-rich ssDNA fragments to prevent TLR9 activation and autoinflammatory response, but it can cleave viral RNA to generate ligands for TLR7 activation and initiate antiviral immune responses. In plasmacytoid dendritic cells, it cooperates with endonuclease RNASET2 to release 2',3'-cyclic guanosine monophosphate (2',3'-cGMP), a potent stimulatory ligand for TLR7. Produces 2',3'-cGMPs and cytidine-rich RNA fragments that occupy TLR7 ligand-binding pockets and trigger a signaling-competent state. Can exert polynucleotide phosphatase activity toward 5'-phosphorylated ssDNA substrates although at a slow rate. Transphosphatidylase that catalyzes the exchange with R to S stereo-inversion of the glycerol moiety between (S,R)-lysophosphatidylglycerol (LPG) and monoacylglycerol (MAG) substrates to yield (S,S)-bis(monoacylglycero)phosphate (BMP). Can synthesize a variety of (S,S)-BMPs representing the main phospholipid constituent of lysosomal intralumenal vesicle (ILV) membranes that bind acid hydrolases for lipid degradation. Regulates the homeostasis and interorganellar communication of the endolysosomal system with an overall impact on cellular removal of dysfunctional organelles via autophagy as well as proper protein and lipid turnover. May play a role in myotube formation in response to ER stress. The sequence is that of 5'-3' exonuclease PLD3 (PLD3) from Macaca fascicularis (Crab-eating macaque).